Here is a 919-residue protein sequence, read N- to C-terminus: Valine--tRNA ligase (919 aa).

The short motif at 46-56 (PNVTGTLHMGH) is the 'HIGH' region element. A 'KMSKS' region motif is present at residues 528–532 (KMSKS). An ATP-binding site is contributed by K531. A coiled-coil region spans residues 849-919 (LAGLVDIEAE…KTLEKKEALG (71 aa)).

This sequence belongs to the class-I aminoacyl-tRNA synthetase family. ValS type 1 subfamily. As to quaternary structure, monomer.

It localises to the cytoplasm. The enzyme catalyses tRNA(Val) + L-valine + ATP = L-valyl-tRNA(Val) + AMP + diphosphate. In terms of biological role, catalyzes the attachment of valine to tRNA(Val). As ValRS can inadvertently accommodate and process structurally similar amino acids such as threonine, to avoid such errors, it has a 'posttransfer' editing activity that hydrolyzes mischarged Thr-tRNA(Val) in a tRNA-dependent manner. In Francisella tularensis subsp. tularensis (strain SCHU S4 / Schu 4), this protein is Valine--tRNA ligase.